Here is a 174-residue protein sequence, read N- to C-terminus: Crossover junction endodeoxyribonuclease RuvC (174 aa).

Residues aspartate 8, glutamate 68, and aspartate 140 contribute to the active site. Mg(2+)-binding residues include aspartate 8, glutamate 68, and aspartate 140.

Belongs to the RuvC family. In terms of assembly, homodimer which binds Holliday junction (HJ) DNA. The HJ becomes 2-fold symmetrical on binding to RuvC with unstacked arms; it has a different conformation from HJ DNA in complex with RuvA. In the full resolvosome a probable DNA-RuvA(4)-RuvB(12)-RuvC(2) complex forms which resolves the HJ. Mg(2+) is required as a cofactor.

It is found in the cytoplasm. It carries out the reaction Endonucleolytic cleavage at a junction such as a reciprocal single-stranded crossover between two homologous DNA duplexes (Holliday junction).. Functionally, the RuvA-RuvB-RuvC complex processes Holliday junction (HJ) DNA during genetic recombination and DNA repair. Endonuclease that resolves HJ intermediates. Cleaves cruciform DNA by making single-stranded nicks across the HJ at symmetrical positions within the homologous arms, yielding a 5'-phosphate and a 3'-hydroxyl group; requires a central core of homology in the junction. The consensus cleavage sequence is 5'-(A/T)TT(C/G)-3'. Cleavage occurs on the 3'-side of the TT dinucleotide at the point of strand exchange. HJ branch migration catalyzed by RuvA-RuvB allows RuvC to scan DNA until it finds its consensus sequence, where it cleaves and resolves the cruciform DNA. The sequence is that of Crossover junction endodeoxyribonuclease RuvC from Legionella pneumophila (strain Paris).